The primary structure comprises 390 residues: 3-ketosteroid-9-alpha-monooxygenase, oxygenase component (390 aa).

A Rieske domain is found at 32–134; the sequence is WHCLGLLRDF…TLERNGQLYV (103 aa). The [2Fe-2S] cluster site is built by C73, H75, C92, and H95. Positions 181, 187, 192, and 311 each coordinate Fe cation.

Homotrimer. The two-component system 3-ketosteroid-9-alpha-monooxygenase is composed of an oxygenase component KshA and a reductase component KshB. The cofactor is [2Fe-2S] cluster. Fe cation serves as cofactor.

The catalysed reaction is androsta-1,4-diene-3,17-dione + 2 reduced [2Fe-2S]-[ferredoxin] + O2 + 2 H(+) = 9alpha-hydroxyandrosta-1,4-diene-3,17-dione + 2 oxidized [2Fe-2S]-[ferredoxin] + H2O. It participates in steroid metabolism; cholesterol degradation. In terms of biological role, probably involved in the degradation of cholesterol. In vitro, catalyzes the introduction of a 9alpha-hydroxyl moiety into the ring B of 3-ketosteroid substrates such as 1,4-androstadiene-3,17-dione (ADD), 4-androstene-3,17-dione (AD), 4-androstene-17beta-ol-3-one (testosterone), 4-pregnene-3,20-dione (progesterone), 19-nor-4-androstene-3,17-dione, 1-(5alpha)-androstene-3,17-dione, 5alpha-androstane-3,17-dione, 5beta-androstane-3,17-dione, 5alpha-androstane-17beta-ol-3-one (stanolon), 11beta-hydrocortisone, 3-oxo-23,24-bisnorcholesta-4-en-22-oate (4-BNC), 23,24-bisnorcholesta-4-ene-22-oate, 3-oxo-23,24-bisnorcholesta-1,4-dien-22-oate (1,4-BNC) and 3-oxo-23,24-bisnorcholesta-1,4-dien-22-oyl-coenzyme A thioester (1,4-BNC-CoA). KshA5 has the broadest substrate range without a clear substrate preference and is active with Delta-4, Delta-1,4, 5alpha-H and 5beta-H steroids, as well as with steroids having bulky aliphatic side chains and an isopropionyl side chain at C17. This Rhodococcus rhodochrous protein is 3-ketosteroid-9-alpha-monooxygenase, oxygenase component.